A 267-amino-acid polypeptide reads, in one-letter code: Inositol-1-monophosphatase (267 aa).

The Mg(2+) site is built by E66, D84, L86, and D87. E66 contacts substrate. Substrate contacts are provided by residues 86–89, R182, and D213; that span reads LDGS. Residue D213 coordinates Mg(2+).

This sequence belongs to the inositol monophosphatase superfamily. Mg(2+) serves as cofactor.

The catalysed reaction is a myo-inositol phosphate + H2O = myo-inositol + phosphate. The chain is Inositol-1-monophosphatase (suhB) from Aeropyrum pernix (strain ATCC 700893 / DSM 11879 / JCM 9820 / NBRC 100138 / K1).